The sequence spans 304 residues: Ornithine carbamoyltransferase (304 aa).

Carbamoyl phosphate contacts are provided by residues 53-56, glutamine 80, arginine 104, and 131-134; these read STRT and HPCQ. Residues asparagine 162, aspartate 222, and 226-227 contribute to the L-ornithine site; that span reads SM. Carbamoyl phosphate is bound by residues 261–262 and arginine 289; that span reads CL.

It belongs to the aspartate/ornithine carbamoyltransferase superfamily. OTCase family.

It is found in the cytoplasm. It catalyses the reaction carbamoyl phosphate + L-ornithine = L-citrulline + phosphate + H(+). It participates in amino-acid biosynthesis; L-arginine biosynthesis; L-arginine from L-ornithine and carbamoyl phosphate: step 1/3. Its function is as follows. Reversibly catalyzes the transfer of the carbamoyl group from carbamoyl phosphate (CP) to the N(epsilon) atom of ornithine (ORN) to produce L-citrulline. In Rhizobium johnstonii (strain DSM 114642 / LMG 32736 / 3841) (Rhizobium leguminosarum bv. viciae), this protein is Ornithine carbamoyltransferase.